Reading from the N-terminus, the 227-residue chain is MAYPLQLGLQDATSPIMEELMNFHDHTLMIVFLISSLVLYVISSMLTTKLTHTSTMDAQEVETIWTILPAVILIMIALPSLRILYMMDEINNPVLTVKTMGHQWYWSYEYTDYEDLCFDSYMIPTTDLKPGEFRLLEVDNRVILPMELPIRMLISSEDVLHSWAIPSLGLKTDAIPGRLNQATISSNRPGLFYGQCSEICGSNHSFMPIILEMVPLKNFETWSVSMI.

At 1 to 14 the chain is on the mitochondrial intermembrane side; that stretch reads MAYPLQLGLQDATS. A helical transmembrane segment spans residues 15–45; it reads PIMEELMNFHDHTLMIVFLISSLVLYVISSM. Over 46 to 59 the chain is Mitochondrial matrix; sequence LTTKLTHTSTMDAQ. A helical transmembrane segment spans residues 60–87; sequence EVETIWTILPAVILIMIALPSLRILYMM. Over 88-227 the chain is Mitochondrial intermembrane; the sequence is DEINNPVLTV…NFETWSVSMI (140 aa). Residues histidine 161, cysteine 196, glutamate 198, cysteine 200, histidine 204, and methionine 207 each coordinate Cu cation. Glutamate 198 is a binding site for Mg(2+).

It belongs to the cytochrome c oxidase subunit 2 family. Component of the cytochrome c oxidase (complex IV, CIV), a multisubunit enzyme composed of 14 subunits. The complex is composed of a catalytic core of 3 subunits MT-CO1, MT-CO2 and MT-CO3, encoded in the mitochondrial DNA, and 11 supernumerary subunits COX4I, COX5A, COX5B, COX6A, COX6B, COX6C, COX7A, COX7B, COX7C, COX8 and NDUFA4, which are encoded in the nuclear genome. The complex exists as a monomer or a dimer and forms supercomplexes (SCs) in the inner mitochondrial membrane with NADH-ubiquinone oxidoreductase (complex I, CI) and ubiquinol-cytochrome c oxidoreductase (cytochrome b-c1 complex, complex III, CIII), resulting in different assemblies (supercomplex SCI(1)III(2)IV(1) and megacomplex MCI(2)III(2)IV(2)). Found in a complex with TMEM177, COA6, COX18, COX20, SCO1 and SCO2. Interacts with TMEM177 in a COX20-dependent manner. Interacts with COX20. Interacts with COX16. Requires Cu cation as cofactor.

The protein localises to the mitochondrion inner membrane. It catalyses the reaction 4 Fe(II)-[cytochrome c] + O2 + 8 H(+)(in) = 4 Fe(III)-[cytochrome c] + 2 H2O + 4 H(+)(out). Its function is as follows. Component of the cytochrome c oxidase, the last enzyme in the mitochondrial electron transport chain which drives oxidative phosphorylation. The respiratory chain contains 3 multisubunit complexes succinate dehydrogenase (complex II, CII), ubiquinol-cytochrome c oxidoreductase (cytochrome b-c1 complex, complex III, CIII) and cytochrome c oxidase (complex IV, CIV), that cooperate to transfer electrons derived from NADH and succinate to molecular oxygen, creating an electrochemical gradient over the inner membrane that drives transmembrane transport and the ATP synthase. Cytochrome c oxidase is the component of the respiratory chain that catalyzes the reduction of oxygen to water. Electrons originating from reduced cytochrome c in the intermembrane space (IMS) are transferred via the dinuclear copper A center (CU(A)) of subunit 2 and heme A of subunit 1 to the active site in subunit 1, a binuclear center (BNC) formed by heme A3 and copper B (CU(B)). The BNC reduces molecular oxygen to 2 water molecules using 4 electrons from cytochrome c in the IMS and 4 protons from the mitochondrial matrix. The sequence is that of Cytochrome c oxidase subunit 2 (MT-CO2) from Malacothrix typica (Long-eared mouse).